Here is a 192-residue protein sequence, read N- to C-terminus: MSSKEQKTPNEQVSEEMENAAEQQVEATQETGEGVDPRVAELEAQLAAAVQRERESLLRAKAEVENIRRRTEQDVEKAHKFALEKFSAELLPVIDNLERALDTADKTNAELAAMIEGVELTLKSLLDAVGKYGIQVVSETNVPFNPEVHQAMTMLESADHEPNHVMMVMQKGYTLNGRLLRPAMVAVSKAKA.

The disordered stretch occupies residues 1-34; it reads MSSKEQKTPNEQVSEEMENAAEQQVEATQETGEG. Over residues 21-31 the composition is skewed to polar residues; the sequence is AEQQVEATQET.

This sequence belongs to the GrpE family. In terms of assembly, homodimer.

The protein localises to the cytoplasm. Its function is as follows. Participates actively in the response to hyperosmotic and heat shock by preventing the aggregation of stress-denatured proteins, in association with DnaK and GrpE. It is the nucleotide exchange factor for DnaK and may function as a thermosensor. Unfolded proteins bind initially to DnaJ; upon interaction with the DnaJ-bound protein, DnaK hydrolyzes its bound ATP, resulting in the formation of a stable complex. GrpE releases ADP from DnaK; ATP binding to DnaK triggers the release of the substrate protein, thus completing the reaction cycle. Several rounds of ATP-dependent interactions between DnaJ, DnaK and GrpE are required for fully efficient folding. The protein is Protein GrpE of Yersinia enterocolitica serotype O:8 / biotype 1B (strain NCTC 13174 / 8081).